A 70-amino-acid polypeptide reads, in one-letter code: DNA-directed RNA polymerase subunit omega (70 aa).

It belongs to the RNA polymerase subunit omega family. As to quaternary structure, the RNAP catalytic core consists of 2 alpha, 1 beta, 1 beta' and 1 omega subunit. When a sigma factor is associated with the core the holoenzyme is formed, which can initiate transcription.

The enzyme catalyses RNA(n) + a ribonucleoside 5'-triphosphate = RNA(n+1) + diphosphate. Promotes RNA polymerase assembly. Latches the N- and C-terminal regions of the beta' subunit thereby facilitating its interaction with the beta and alpha subunits. The chain is DNA-directed RNA polymerase subunit omega from Shouchella clausii (strain KSM-K16) (Alkalihalobacillus clausii).